Reading from the N-terminus, the 356-residue chain is UDP-N-acetylglucosamine--N-acetylmuramyl-(pentapeptide) pyrophosphoryl-undecaprenol N-acetylglucosamine transferase (356 aa).

UDP-N-acetyl-alpha-D-glucosamine is bound by residues 14–16 (TGG), Asn-126, Arg-162, Ser-190, Ile-244, and Gln-289.

Belongs to the glycosyltransferase 28 family. MurG subfamily.

The protein localises to the cell inner membrane. The catalysed reaction is di-trans,octa-cis-undecaprenyl diphospho-N-acetyl-alpha-D-muramoyl-L-alanyl-D-glutamyl-meso-2,6-diaminopimeloyl-D-alanyl-D-alanine + UDP-N-acetyl-alpha-D-glucosamine = di-trans,octa-cis-undecaprenyl diphospho-[N-acetyl-alpha-D-glucosaminyl-(1-&gt;4)]-N-acetyl-alpha-D-muramoyl-L-alanyl-D-glutamyl-meso-2,6-diaminopimeloyl-D-alanyl-D-alanine + UDP + H(+). It functions in the pathway cell wall biogenesis; peptidoglycan biosynthesis. Its function is as follows. Cell wall formation. Catalyzes the transfer of a GlcNAc subunit on undecaprenyl-pyrophosphoryl-MurNAc-pentapeptide (lipid intermediate I) to form undecaprenyl-pyrophosphoryl-MurNAc-(pentapeptide)GlcNAc (lipid intermediate II). This Cupriavidus necator (strain ATCC 17699 / DSM 428 / KCTC 22496 / NCIMB 10442 / H16 / Stanier 337) (Ralstonia eutropha) protein is UDP-N-acetylglucosamine--N-acetylmuramyl-(pentapeptide) pyrophosphoryl-undecaprenol N-acetylglucosamine transferase.